The chain runs to 404 residues: Cysteine desulfurase IscS (404 aa).

Pyridoxal 5'-phosphate is bound by residues 73–74 (AT), asparagine 153, glutamine 181, and 201–203 (SAH). Position 204 is an N6-(pyridoxal phosphate)lysine (lysine 204). Threonine 241 is a binding site for pyridoxal 5'-phosphate. Residue cysteine 327 is the Cysteine persulfide intermediate of the active site. Residue cysteine 327 participates in [2Fe-2S] cluster binding.

It belongs to the class-V pyridoxal-phosphate-dependent aminotransferase family. NifS/IscS subfamily. In terms of assembly, homodimer. Forms a heterotetramer with IscU, interacts with other sulfur acceptors. The cofactor is pyridoxal 5'-phosphate.

It is found in the cytoplasm. The catalysed reaction is (sulfur carrier)-H + L-cysteine = (sulfur carrier)-SH + L-alanine. The protein operates within cofactor biosynthesis; iron-sulfur cluster biosynthesis. In terms of biological role, master enzyme that delivers sulfur to a number of partners involved in Fe-S cluster assembly, tRNA modification or cofactor biosynthesis. Catalyzes the removal of elemental sulfur atoms from cysteine to produce alanine. Functions as a sulfur delivery protein for Fe-S cluster synthesis onto IscU, an Fe-S scaffold assembly protein, as well as other S acceptor proteins. This Anaeromyxobacter sp. (strain Fw109-5) protein is Cysteine desulfurase IscS.